The primary structure comprises 492 residues: Bifunctional purine biosynthesis protein PurH (492 aa).

In terms of domain architecture, MGS-like spans methionine 1–valine 144.

This sequence belongs to the PurH family.

The catalysed reaction is (6R)-10-formyltetrahydrofolate + 5-amino-1-(5-phospho-beta-D-ribosyl)imidazole-4-carboxamide = 5-formamido-1-(5-phospho-D-ribosyl)imidazole-4-carboxamide + (6S)-5,6,7,8-tetrahydrofolate. The enzyme catalyses IMP + H2O = 5-formamido-1-(5-phospho-D-ribosyl)imidazole-4-carboxamide. It participates in purine metabolism; IMP biosynthesis via de novo pathway; 5-formamido-1-(5-phospho-D-ribosyl)imidazole-4-carboxamide from 5-amino-1-(5-phospho-D-ribosyl)imidazole-4-carboxamide (10-formyl THF route): step 1/1. The protein operates within purine metabolism; IMP biosynthesis via de novo pathway; IMP from 5-formamido-1-(5-phospho-D-ribosyl)imidazole-4-carboxamide: step 1/1. The protein is Bifunctional purine biosynthesis protein PurH of Staphylococcus haemolyticus (strain JCSC1435).